The chain runs to 266 residues: Carboxy-S-adenosyl-L-methionine synthase (266 aa).

The tract at residues methionine 1–aspartate 24 is disordered. S-adenosyl-L-methionine is bound by residues tyrosine 58, glycine 83–serine 85, aspartate 108–asparagine 109, aspartate 136–isoleucine 137, asparagine 151, and arginine 218.

Belongs to the class I-like SAM-binding methyltransferase superfamily. Cx-SAM synthase family. As to quaternary structure, homodimer.

The enzyme catalyses prephenate + S-adenosyl-L-methionine = carboxy-S-adenosyl-L-methionine + 3-phenylpyruvate + H2O. Functionally, catalyzes the conversion of S-adenosyl-L-methionine (SAM) to carboxy-S-adenosyl-L-methionine (Cx-SAM). The sequence is that of Carboxy-S-adenosyl-L-methionine synthase from Yersinia enterocolitica serotype O:8 / biotype 1B (strain NCTC 13174 / 8081).